We begin with the raw amino-acid sequence, 459 residues long: tRNA modification GTPase MnmE (459 aa).

(6S)-5-formyl-5,6,7,8-tetrahydrofolate contacts are provided by Arg-21, Glu-84, and Arg-123. The TrmE-type G domain maps to 219–378 (GVTVALAGAV…LLVLLYNFVL (160 aa)). Residues 229–234 (NAGKSS), 248–254 (TEHPGTT), and 273–276 (DTAG) contribute to the GTP site. 2 residues coordinate Mg(2+): Ser-233 and Thr-254. Residue Lys-459 coordinates (6S)-5-formyl-5,6,7,8-tetrahydrofolate.

The protein belongs to the TRAFAC class TrmE-Era-EngA-EngB-Septin-like GTPase superfamily. TrmE GTPase family. As to quaternary structure, homodimer. Heterotetramer of two MnmE and two MnmG subunits. Requires K(+) as cofactor.

Its subcellular location is the cytoplasm. Its function is as follows. Exhibits a very high intrinsic GTPase hydrolysis rate. Involved in the addition of a carboxymethylaminomethyl (cmnm) group at the wobble position (U34) of certain tRNAs, forming tRNA-cmnm(5)s(2)U34. This is tRNA modification GTPase MnmE from Lawsonia intracellularis (strain PHE/MN1-00).